The following is a 138-amino-acid chain: uncharacterized protein (138 aa).

A helical membrane pass occupies residues 11-33 (ILLGLTLSLTFLYPLIITLIILY).

It localises to the membrane. This is an uncharacterized protein from Aquifex aeolicus (strain VF5).